The sequence spans 1233 residues: Pesticidal crystal protein Cry1Bc (1233 aa).

It belongs to the delta endotoxin family.

Its function is as follows. Promotes colloidosmotic lysis by binding to the midgut epithelial cells of insects. This is Pesticidal crystal protein Cry1Bc (cry1Bc) from Bacillus thuringiensis subsp. morrisoni.